The chain runs to 302 residues: Probable lipid kinase YegS-like (302 aa).

A DAGKc domain is found at 1-129; sequence MDKDKVLLVL…IDLGAVNGKL (129 aa). ATP is bound by residues threonine 39, 65 to 71, and threonine 92; that span reads GDGTLRE. Mg(2+) is bound by residues arginine 210, aspartate 213, and leucine 215. The active-site Proton acceptor is glutamate 268.

The protein belongs to the diacylglycerol/lipid kinase family. YegS lipid kinase subfamily. It depends on Mg(2+) as a cofactor. Ca(2+) serves as cofactor.

It localises to the cytoplasm. Its function is as follows. Probably phosphorylates lipids; the in vivo substrate is unknown. In Pseudomonas aeruginosa (strain UCBPP-PA14), this protein is Probable lipid kinase YegS-like.